A 180-amino-acid chain; its full sequence is Large ribosomal subunit protein uL5 (180 aa).

The protein belongs to the universal ribosomal protein uL5 family. Part of the 50S ribosomal subunit; part of the 5S rRNA/L5/L18/L25 subcomplex. Contacts the 5S rRNA and the P site tRNA. Forms a bridge to the 30S subunit in the 70S ribosome.

This is one of the proteins that bind and probably mediate the attachment of the 5S RNA into the large ribosomal subunit, where it forms part of the central protuberance. In the 70S ribosome it contacts protein S13 of the 30S subunit (bridge B1b), connecting the 2 subunits; this bridge is implicated in subunit movement. Contacts the P site tRNA; the 5S rRNA and some of its associated proteins might help stabilize positioning of ribosome-bound tRNAs. The polypeptide is Large ribosomal subunit protein uL5 (Lactiplantibacillus plantarum (strain ATCC BAA-793 / NCIMB 8826 / WCFS1) (Lactobacillus plantarum)).